Consider the following 168-residue polypeptide: Photosystem I assembly protein Ycf3 (168 aa).

3 TPR repeats span residues 35–68, 72–105, and 120–153; these read AFTY…EIDP, SYIL…NPFL, and GEQA…TPGN.

Belongs to the Ycf3 family.

Its subcellular location is the plastid. The protein resides in the chloroplast thylakoid membrane. In terms of biological role, essential for the assembly of the photosystem I (PSI) complex. May act as a chaperone-like factor to guide the assembly of the PSI subunits. The polypeptide is Photosystem I assembly protein Ycf3 (Buxus microphylla (Littleleaf boxwood)).